We begin with the raw amino-acid sequence, 144 residues long: Large ribosomal subunit protein uL11 (144 aa).

It belongs to the universal ribosomal protein uL11 family. In terms of assembly, part of the ribosomal stalk of the 50S ribosomal subunit. Interacts with L10 and the large rRNA to form the base of the stalk. L10 forms an elongated spine to which L12 dimers bind in a sequential fashion forming a multimeric L10(L12)X complex. Post-translationally, one or more lysine residues are methylated.

Functionally, forms part of the ribosomal stalk which helps the ribosome interact with GTP-bound translation factors. This chain is Large ribosomal subunit protein uL11, found in Saccharopolyspora erythraea (strain ATCC 11635 / DSM 40517 / JCM 4748 / NBRC 13426 / NCIMB 8594 / NRRL 2338).